We begin with the raw amino-acid sequence, 182 residues long: Endoribonuclease YbeY (182 aa).

3 residues coordinate Zn(2+): His115, His119, and His125.

It belongs to the endoribonuclease YbeY family. Zn(2+) serves as cofactor.

Its subcellular location is the cytoplasm. In terms of biological role, single strand-specific metallo-endoribonuclease involved in late-stage 70S ribosome quality control and in maturation of the 3' terminus of the 16S rRNA. The chain is Endoribonuclease YbeY from Bifidobacterium longum subsp. infantis (strain ATCC 15697 / DSM 20088 / JCM 1222 / NCTC 11817 / S12).